The primary structure comprises 328 residues: Phospholipid scramblase 1 (328 aa).

The tract at residues methionine 1–proline 93 is proline-rich domain (PRD). The tract at residues methionine 1 to proline 96 is disordered. Residues methionine 1–lysine 297 are Cytoplasmic-facing. Residues proline 18–proline 26 carry the SH3-binding 1 motif. The PPxY motif motif lies at proline 22 to tyrosine 25. Positions alanine 28–glutamine 47 are enriched in low complexity. Over residues proline 49 to proline 64 the composition is skewed to pro residues. An SH3-binding 2 motif is present at residues proline 56–proline 64. Phosphotyrosine; by ABL is present on tyrosine 83. The short motif at proline 93–proline 101 is the SH3-binding 3 element. Position 170 is a phosphothreonine; by PKC/PRKCD (threonine 170). S-palmitoyl cysteine attachment occurs at residues cysteine 193, cysteine 194, cysteine 197, and cysteine 198. A Nuclear localization signal motif is present at residues serine 269–phenylalanine 275. A helical membrane pass occupies residues methionine 298–phenylalanine 314. Over glutamate 315–glutamine 328 the chain is Extracellular.

Belongs to the phospholipid scramblase family. In terms of assembly, forms homooligomers in the presence of calcium. Interacts with ABL. Interacts with RELT, RELL1 and RELL2. Interacts with OXSR1 in the presence of RELT. Interacts with OCLN, TOP2A and TOP2B. Interacts with TRPC1, TRPC4 and TRPC5. Interacts with ILDR1. Ca(2+) serves as cofactor. Mg(2+) is required as a cofactor. The cofactor is Zn(2+). Phosphorylation at Thr-170 by PKC/PKCD increases its phospholipid scramblase activity during both cell stimulation and apoptosis. Phosphorylated by OXSR1 in the presence of RELT. Post-translationally, palmitoylation is required for its phospholipid scramblase activity. Palmitoylation regulates its localization to the cell membrane or the nucleus; trafficking to the cell membrane is dependent upon palmitoylation whereas in the absence of palmitoylation, localizes to the nucleus. As to expression, highly expressed in kidney, lung, liver and bone marrow, slightly in spleen, heart and macrophage.

The protein resides in the cell membrane. It localises to the nucleus. Its subcellular location is the cytoplasm. It is found in the perinuclear region. The enzyme catalyses a 1,2-diacyl-sn-glycero-3-phosphocholine(in) = a 1,2-diacyl-sn-glycero-3-phosphocholine(out). The catalysed reaction is a 1,2-diacyl-sn-glycero-3-phosphoethanolamine(in) = a 1,2-diacyl-sn-glycero-3-phosphoethanolamine(out). It catalyses the reaction a 1,2-diacyl-sn-glycero-3-phospho-L-serine(in) = a 1,2-diacyl-sn-glycero-3-phospho-L-serine(out). Its function is as follows. Catalyzes calcium-induced ATP-independent rapid bidirectional and non-specific distribution of phospholipids (lipid scrambling or lipid flip-flop) between the inner and outer leaflet of the plasma membrane resulting in collapse of the phospholipid asymmetry which leads to phosphatidylserine externalization on the cell surface. Mediates calcium-dependent phosphatidylserine externalization and apoptosis in neurons via its association with TRPC5. Also exhibits magnesium-dependent nuclease activity against double-stranded DNA and RNA but not single-stranded DNA and can enhance DNA decatenation mediated by TOP2A. Negatively regulates FcR-mediated phagocytosis in differentiated macrophages. May contribute to cytokine-regulated cell proliferation and differentiation. The protein is Phospholipid scramblase 1 (Plscr1) of Mus musculus (Mouse).